We begin with the raw amino-acid sequence, 252 residues long: SPbeta prophage-derived uncharacterized protein YomH (252 aa).

The polypeptide is SPbeta prophage-derived uncharacterized protein YomH (yomH) (Bacillus subtilis (strain 168)).